The following is a 736-amino-acid chain: Transcription factor E2F8 (736 aa).

The interval 1–26 (MEEGSKENCGFNGSPMGSRSPPKQLT) is disordered. Residues 15-26 (PMGSRSPPKQLT) show a composition bias toward polar residues. 2 consecutive DNA-binding regions follow at residues 98–167 (RKEK…IWHG) and 240–326 (RKEK…QWTC). 4 disordered regions span residues 386 to 405 (RRKI…GSSS), 435 to 456 (SACK…QTPT), 483 to 551 (EQTL…AVDD), and 716 to 736 (PGGM…GTDD). Low complexity predominate over residues 393 to 405 (PSSPIKSGDGSSS). Basic and acidic residues-rich tracts occupy residues 509 to 539 (GRHE…DRGC) and 726 to 736 (SARKLDVGTDD).

The protein belongs to the E2F/DP family. As to quaternary structure, homodimer and heterodimer: mainly forms homodimers and, to a lesser extent, heterodimers with e2f7.

The protein resides in the nucleus. In terms of biological role, atypical E2F transcription factor that participates in various processes such as angiogenesis and polyploidization of specialized cells. Mainly acts as a transcription repressor that binds DNA independently of DP proteins and specifically recognizes the E2 recognition site 5'-TTTC[CG]CGC-3'. Directly represses transcription of classical E2F transcription factors such as e2f1. Acts as a regulator of S-phase by recognizing and binding the E2-related site 5'-TTCCCGCC-3' and mediating repression of G1/S-regulated genes. Acts as a promoter of sprouting angiogenesis, possibly by acting as a transcription activator. The protein is Transcription factor E2F8 (e2f8) of Xenopus tropicalis (Western clawed frog).